The sequence spans 382 residues: Two-component response regulator ARR14 (382 aa).

A Response regulatory domain is found at Arg-12–Val-128. Residue Asp-63 is modified to 4-aspartylphosphate. Residues Cys-171 to Ser-181 show a composition bias toward basic residues. A disordered region spans residues Cys-171–Leu-193. The Nuclear localization signal signature appears at Lys-199–Arg-202. The segment at residues Arg-202–Arg-252 is a DNA-binding region (myb-like GARP).

This sequence belongs to the ARR family. Type-B subfamily. Binds the target DNA as a monomer. Post-translationally, two-component system major event consists of a His-to-Asp phosphorelay between a sensor histidine kinase (HK) and a response regulator (RR). In plants, the His-to-Asp phosphorelay involves an additional intermediate named Histidine-containing phosphotransfer protein (HPt). This multistep phosphorelay consists of a His-Asp-His-Asp sequential transfer of a phosphate group between first a His and an Asp of the HK protein, followed by the transfer to a conserved His of the HPt protein and finally the transfer to an Asp in the receiver domain of the RR protein. In terms of tissue distribution, predominantly expressed in young leaf tissue.

It localises to the nucleus. In terms of biological role, transcriptional activator that binds specifically to the DNA sequence 5'-[AG]GATT-3'. Functions as a response regulator involved in His-to-Asp phosphorelay signal transduction system. Phosphorylation of the Asp residue in the receiver domain activates the ability of the protein to promote the transcription of target genes. Could directly activate some type-A response regulators in response to cytokinins. The chain is Two-component response regulator ARR14 (ARR14) from Arabidopsis thaliana (Mouse-ear cress).